Here is a 379-residue protein sequence, read N- to C-terminus: Gonadotropin-releasing hormone II receptor (379 aa).

At 1 to 40 (MSAGNGTPWGSAAGEESWAASGVAVEGSELPTFSAAAKVR) the chain is on the extracellular side. Residues 41–60 (VGVTIVLFVSSAGGNLAVLW) traverse the membrane as a helical segment. The Cytoplasmic segment spans residues 61–76 (SVTRPQPSQLRPSPVR). A helical transmembrane segment spans residues 77-96 (TLFAHLAAADLLVTFVVMPL). The Extracellular portion of the chain corresponds to 97–114 (DATWNITVQWLAEDIACR). N101 is a glycosylation site (N-linked (GlcNAc...) asparagine). The cysteines at positions 113 and 188 are disulfide-linked. A helical transmembrane segment spans residues 115 to 136 (TLMFLKLMAMYSAAFLPVVIGL). Residues 137-160 (DRQAAVLNPLGSRSGVRKLLGAAW) are Cytoplasmic-facing. The chain crosses the membrane as a helical span at residues 161-178 (GLSFLLALPQLFLFHTVH). Residues 179-204 (RAGPVPFTQCVTKGSFKARWQETTYN) are Extracellular-facing. The chain crosses the membrane as a helical span at residues 205–224 (LFTFRCLFLLPLTAMAICYS). The Cytoplasmic portion of the chain corresponds to 225–278 (HIVLSVSSPQTRKGSHAPAGEFALCRSFDNCPRVRLWALRLALLILLTFILCWT). A helical membrane pass occupies residues 279–297 (PYYLLGLWYWFSPTMLTEV). Residues 298–303 (PPSLSH) are Extracellular-facing. A helical membrane pass occupies residues 304–323 (ILFLFGLLNAPLDPLLYGAF). At 324–379 (TLGCQRGHQELSIDSSNEGSGRMLQQEIHALRQQEVQKTVTSRSAGETKDISITSI) the chain is on the cytoplasmic side.

This sequence belongs to the G-protein coupled receptor 1 family. In terms of processing, phosphorylated on the C-terminal cytoplasmic tail.

The protein localises to the cell membrane. Functionally, receptor for gonadotropin releasing hormone II (GnRH II). This receptor mediates its action by association with G proteins that activate a phosphatidylinositol-calcium second messenger system. The polypeptide is Gonadotropin-releasing hormone II receptor (GNRHR2) (Macaca mulatta (Rhesus macaque)).